Here is a 583-residue protein sequence, read N- to C-terminus: Chitinase 2 (583 aa).

The first 19 residues, 1 to 19 (MLSFKSLLAAAVVASSALA), serve as a signal peptide directing secretion. One can recognise a GH18 domain in the interval 23 to 305 (NQVALYWGQN…VQVKNVLNQN (283 aa)). Glu153 serves as the catalytic Proton donor. 3 N-linked (GlcNAc...) asparagine glycosylation sites follow: Asn370, Asn546, and Asn549. Gly560 carries GPI-anchor amidated glycine lipidation. A propeptide spans 561 to 583 (AAVANSLNSVWFTVPFLLAAFAF) (removed in mature form).

Belongs to the glycosyl hydrolase 18 family. Chitinase class III subfamily. Post-translationally, the GPI-anchor is attached to the protein in the endoplasmic reticulum and serves to target the protein to the cell surface. There, the glucosamine-inositol phospholipid moiety is cleaved off and the GPI-modified mannoprotein is covalently attached via its lipidless GPI glycan remnant to the 1,6-beta-glucan of the outer cell wall layer. Proteolytic cleavage by SAP9 and SAP10 leads to the cell wall release of CHT2 and increased chitinase activity, suggesting a direct influence of SAP9 and SAP10 on CHT2 function.

It is found in the secreted. The protein localises to the cell wall. It localises to the membrane. The catalysed reaction is Random endo-hydrolysis of N-acetyl-beta-D-glucosaminide (1-&gt;4)-beta-linkages in chitin and chitodextrins.. Chitinase involved in the remodeling of chitin in the fungal cell wall. Plays a role in cell separation. This chain is Chitinase 2 (CHT2), found in Candida albicans (strain SC5314 / ATCC MYA-2876) (Yeast).